A 342-amino-acid chain; its full sequence is MVKKNDLFVDVASHQGYDISGILEEAGTTNTIIKVSESTSYLNPCLSAQVSQSNPIGFYHFAWFGGNEEEAEAEARYFLDNVPTQVKYLVLDYEDHASASVQRNTTACLRFMQIIAEAGYTPIYYSYKPFTLDNVDYQQILAQFPNSLWIAGYGLNDGTANFEYFPSMDGIRWWQYSSNPFDKNIVLLDDEKEDNINNENTLKSLTTVANEVIQGLWGNGQERYDSLANAGYDPQAVQDKVNEILNAREIADLTTVANEVIQGLWGNGQERYDSLANAGYDPQAVQDKVNEILNAREIADLTTVANEVIQGLWGNGQERYDSLANAGYDPQAVQDKVNELLS.

Residues 5–210 (NDLFVDVASH…TLKSLTTVAN (206 aa)) enclose the Ch-type lysozyme domain. Residues aspartate 10, aspartate 92, and glutamate 94 contribute to the active site. The stretch at 205–242 (LTTVANEVIQGLWGNGQERYDSLANAGYDPQAVQDKVN) is one 1; truncated repeat. Residues 205 to 338 (LTTVANEVIQ…DPQAVQDKVN (134 aa)) form a 3 X 48 AA tandem repeats region. Tandem repeats lie at residues 243–290 (EILN…DKVN) and 291–338 (EILN…DKVN).

Belongs to the glycosyl hydrolase 25 family.

It carries out the reaction Hydrolysis of (1-&gt;4)-beta-linkages between N-acetylmuramic acid and N-acetyl-D-glucosamine residues in a peptidoglycan and between N-acetyl-D-glucosamine residues in chitodextrins.. Functionally, responsible for the separation of the host daughter cells at the end of cell division and participates in the liberation of progeny bacteriophage into the medium. Degrades cell walls containing either choline or ethanolamine. The sequence is that of Lysozyme (CPL7) from Streptococcus pneumoniae (Bacteriophage Cp-7).